The chain runs to 259 residues: Phosphate import ATP-binding protein PstB 1 (259 aa).

Residues 7 to 254 (VKPEDVYQIN…PDDHRTKDYI (248 aa)) form the ABC transporter domain. Residue 45–52 (GPSGCGKS) participates in ATP binding.

Belongs to the ABC transporter superfamily. Phosphate importer (TC 3.A.1.7) family. In terms of assembly, the complex is composed of two ATP-binding proteins (PstB), two transmembrane proteins (PstC and PstA) and a solute-binding protein (PstS).

It is found in the cell membrane. The enzyme catalyses phosphate(out) + ATP + H2O = ADP + 2 phosphate(in) + H(+). Its function is as follows. Part of the ABC transporter complex PstSACB involved in phosphate import. Responsible for energy coupling to the transport system. The chain is Phosphate import ATP-binding protein PstB 1 from Bacillus licheniformis (strain ATCC 14580 / DSM 13 / JCM 2505 / CCUG 7422 / NBRC 12200 / NCIMB 9375 / NCTC 10341 / NRRL NRS-1264 / Gibson 46).